Consider the following 463-residue polypeptide: Adenosylhomocysteinase (463 aa).

Positions 54, 128, and 189 each coordinate substrate. Thr-190 to Thr-192 contributes to the NAD(+) binding site. Positions 219 and 223 each coordinate substrate. NAD(+)-binding positions include Asn-224, Gly-253–Gly-258, Glu-276, Asn-311, Ile-332–His-334, and Asn-377.

Belongs to the adenosylhomocysteinase family. NAD(+) serves as cofactor.

It is found in the cytoplasm. It catalyses the reaction S-adenosyl-L-homocysteine + H2O = L-homocysteine + adenosine. It participates in amino-acid biosynthesis; L-homocysteine biosynthesis; L-homocysteine from S-adenosyl-L-homocysteine: step 1/1. Functionally, may play a key role in the regulation of the intracellular concentration of adenosylhomocysteine. In Cereibacter sphaeroides (Rhodobacter sphaeroides), this protein is Adenosylhomocysteinase.